A 385-amino-acid chain; its full sequence is MKRLLAFCLLFFAALGQAKVPPPARSAADAEIQRAVAAFMQQYQVPGVAVGITVDGAERYYNYGVSSRKTQAKVGANTLFEVGSVSKTFTATLASYAQVNQQLSLADHPGKYLPEMKGHDFDKVTLLNLGTHTAGGFPMQVPTQVKTDQQLTAYFQSWHPQYPAGTKRTYANPGIGMLGVIAAKSMRMPFQKAMTGVLLPKLGLTNTYLTVPPAKMAFYAQGYDDKGQPVRMSPGALWEPTYGIKTTARDLLRFVEINLDQVKVEPKLKRAIDGTHVGYYRLGEMTQGLVWEQLPYPASETSLQANSSQKVIFESNAVAALTPPRPPQANVLINKTGSTRGFGAYVAFNPARKIGIVLLMNRSVPMDGRIKLAHTILDTAGGMAK.

The first 20 residues, 1-20, serve as a signal peptide directing secretion; the sequence is MKRLLAFCLLFFAALGQAKV. Serine 84 (acyl-ester intermediate) is an active-site residue. Tyrosine 170 (proton acceptor) is an active-site residue. Residue 335–337 coordinates substrate; the sequence is KTG.

Belongs to the class-C beta-lactamase family.

It is found in the periplasm. The enzyme catalyses a beta-lactam + H2O = a substituted beta-amino acid. Its function is as follows. This protein is a serine beta-lactamase with a substrate specificity for cephalosporins. The protein is Beta-lactamase of Lysobacter lactamgenus.